Here is a 212-residue protein sequence, read N- to C-terminus: Uracil phosphoribosyltransferase (212 aa).

5-phospho-alpha-D-ribose 1-diphosphate is bound by residues Arg78, Arg103, and 130–138; that span reads DPMLATGGS. Residues Ile193 and 198–200 contribute to the uracil site; that span reads GDA. Residue Asp199 coordinates 5-phospho-alpha-D-ribose 1-diphosphate.

The protein belongs to the UPRTase family. The cofactor is Mg(2+).

The enzyme catalyses UMP + diphosphate = 5-phospho-alpha-D-ribose 1-diphosphate + uracil. The protein operates within pyrimidine metabolism; UMP biosynthesis via salvage pathway; UMP from uracil: step 1/1. With respect to regulation, allosterically activated by GTP. Catalyzes the conversion of uracil and 5-phospho-alpha-D-ribose 1-diphosphate (PRPP) to UMP and diphosphate. The protein is Uracil phosphoribosyltransferase of Stutzerimonas stutzeri (strain A1501) (Pseudomonas stutzeri).